The sequence spans 332 residues: Fructose-1,6-bisphosphatase class 1 (332 aa).

4 residues coordinate Mg(2+): glutamate 89, aspartate 110, leucine 112, and aspartate 113. Substrate is bound by residues 113–116, asparagine 206, tyrosine 239, 257–259, and lysine 269; these read DGSS and YLY. Glutamate 275 contacts Mg(2+).

Belongs to the FBPase class 1 family. Homotetramer. Mg(2+) is required as a cofactor.

It localises to the cytoplasm. It carries out the reaction beta-D-fructose 1,6-bisphosphate + H2O = beta-D-fructose 6-phosphate + phosphate. It functions in the pathway carbohydrate biosynthesis; gluconeogenesis. This chain is Fructose-1,6-bisphosphatase class 1, found in Citrobacter koseri (strain ATCC BAA-895 / CDC 4225-83 / SGSC4696).